Consider the following 231-residue polypeptide: Probable amino-acid ABC transporter permease protein y4tG (231 aa).

6 helical membrane-spanning segments follow: residues 9–29 (TGNG…MGLI), 32–52 (LQAA…FAVL), 64–84 (AAVL…FFLY), 86–106 (VLPE…ALGI), 161–181 (YLVS…VEML), and 196–216 (VPLS…SALV). One can recognise an ABC transmembrane type-1 domain in the interval 28–217 (LITTLQAAFL…LTIVASALVR (190 aa)).

The protein belongs to the binding-protein-dependent transport system permease family. HisMQ subfamily.

It is found in the cell inner membrane. Its function is as follows. Probably part of the binding-protein-dependent transport system y4tEFGH for an amino acid. Probably responsible for the translocation of the substrate across the membrane. The protein is Probable amino-acid ABC transporter permease protein y4tG of Sinorhizobium fredii (strain NBRC 101917 / NGR234).